Here is a 254-residue protein sequence, read N- to C-terminus: Isoprenyl transferase (254 aa).

Residue Asp34 is part of the active site. Mg(2+) is bound at residue Asp34. Substrate-binding positions include 35–38 (GNGR), Trp39, Arg47, His51, and 79–81 (STE). Asn82 (proton acceptor) is an active-site residue. Residues Trp83, Arg85, Arg202, and 208–210 (RIS) each bind substrate. Glu221 serves as a coordination point for Mg(2+).

This sequence belongs to the UPP synthase family. Homodimer. Requires Mg(2+) as cofactor.

Its function is as follows. Catalyzes the condensation of isopentenyl diphosphate (IPP) with allylic pyrophosphates generating different type of terpenoids. The sequence is that of Isoprenyl transferase from Staphylococcus saprophyticus subsp. saprophyticus (strain ATCC 15305 / DSM 20229 / NCIMB 8711 / NCTC 7292 / S-41).